The sequence spans 358 residues: Arginase (358 aa).

Mn(2+) contacts are provided by His146, Asp174, His176, and Asp178. Substrate-binding positions include 176-180 (HADIN), 187-189 (SGN), and Asp233. Residues Asp280 and Asp282 each contribute to the Mn(2+) site. Substrate contacts are provided by Thr294 and Glu325.

It belongs to the arginase family. As to quaternary structure, homohexamer. It depends on Mn(2+) as a cofactor.

The protein resides in the cytoplasm. It carries out the reaction L-arginine + H2O = urea + L-ornithine. It participates in nitrogen metabolism; urea cycle; L-ornithine and urea from L-arginine: step 1/1. This is Arginase (aga-1) from Neurospora crassa (strain ATCC 24698 / 74-OR23-1A / CBS 708.71 / DSM 1257 / FGSC 987).